The sequence spans 75 residues: Protein Tlp homolog (75 aa).

Positions 48 to 75 (KNQRRREALDGMREEIKDEARDKKNGYM) are disordered.

Belongs to the Tlp family.

This chain is Protein Tlp homolog, found in Clostridium botulinum (strain 657 / Type Ba4).